The chain runs to 422 residues: Protein krasavietz (422 aa).

A disordered region spans residues 1–26; the sequence is MSQKTERPVLSGQRIKTRKRDEREKY. Residues 244 to 415 enclose the W2 domain; it reads KLHKAQASQE…QSAEEESESE (172 aa). Serine 407, serine 412, and serine 414 each carry phosphoserine.

It belongs to the BZW family. As to expression, expressed in mushroom bodies.

May be involved in memory formation. The polypeptide is Protein krasavietz (kra) (Drosophila melanogaster (Fruit fly)).